A 352-amino-acid polypeptide reads, in one-letter code: S-adenosylmethionine:tRNA ribosyltransferase-isomerase (352 aa).

This sequence belongs to the QueA family. As to quaternary structure, monomer.

It is found in the cytoplasm. It catalyses the reaction 7-aminomethyl-7-carbaguanosine(34) in tRNA + S-adenosyl-L-methionine = epoxyqueuosine(34) in tRNA + adenine + L-methionine + 2 H(+). It participates in tRNA modification; tRNA-queuosine biosynthesis. Functionally, transfers and isomerizes the ribose moiety from AdoMet to the 7-aminomethyl group of 7-deazaguanine (preQ1-tRNA) to give epoxyqueuosine (oQ-tRNA). The polypeptide is S-adenosylmethionine:tRNA ribosyltransferase-isomerase (Paraburkholderia phytofirmans (strain DSM 17436 / LMG 22146 / PsJN) (Burkholderia phytofirmans)).